A 116-amino-acid polypeptide reads, in one-letter code: Dynein light chain Tctex-type 3 (116 aa).

At Y4 the chain carries 3'-nitrotyrosine.

The protein belongs to the dynein light chain Tctex-type family. Homodimer. The cytoplasmic dynein 1 complex consists of two catalytic heavy chains (HCs) and a number of non-catalytic subunits presented by intermediate chains (ICs), light intermediate chains (LICs) and light chains (LCs); the composition seems to vary in respect to the IC, LIC and LC composition. The heavy chain homodimer serves as a scaffold for the probable homodimeric assembly of the respective non-catalytic subunits. The ICs and LICs bind directly to the HC dimer and the LCs assemble on the IC dimer. DYNLT1 and DYNLT3 compete for association with dynein IC (DYNC1I1 or DYNC1I2). Self-associates. Interacts with DYNC1I1 and DYNC1I2. Interacts with BUB3. Interacts with SATB1 in nucleus to form complex with matrix attachment regions (MARs) of DNA.

It is found in the nucleus. The protein localises to the cytoplasm. It localises to the cytoskeleton. Its subcellular location is the chromosome. The protein resides in the centromere. It is found in the kinetochore. Its function is as follows. Acts as one of several non-catalytic accessory components of the cytoplasmic dynein 1 complex that are thought to be involved in linking dynein to cargos and to adapter proteins that regulate dynein function. Cytoplasmic dynein 1 acts as a motor for the intracellular retrograde motility of vesicles and organelles along microtubules. Probably binds BUB3 as part of transport cargo. Required for the efficient progression through mitosis. The polypeptide is Dynein light chain Tctex-type 3 (Dynlt3) (Mus musculus (Mouse)).